The chain runs to 417 residues: Phosphoglycerate kinase 1 (417 aa).

S2 bears the N-acetylserine mark. A phosphoserine mark is found at S2 and S4. Residue K6 is modified to N6-succinyllysine. K11 carries the N6-acetyllysine modification. (2R)-3-phosphoglycerate-binding residues include V23, D24, F25, N26, Q38, and R39. Residues 38–43 (QRIKAA) form a mitochondrial targeting region exposed following cis-trans isomerization by PIN1 and recognized by the TOM complex for mitochondrial translocation of the protein region. Residue K48 is modified to N6-acetyllysine; alternate. K48 carries the N6-succinyllysine; alternate modification. (2R)-3-phosphoglycerate is bound by residues S62, H63, G65, and R66. K75 carries the post-translational modification N6-acetyllysine. Y76 carries the phosphotyrosine modification. 2 positions are modified to N6-acetyllysine: K86 and K91. K97 carries the post-translational modification N6-acetyllysine; alternate. At K97 the chain carries N6-(2-hydroxyisobutyryl)lysine; alternate. Residues L122 and R123 each contribute to the (2R)-3-phosphoglycerate site. Residue K131 is modified to N6-acetyllysine; alternate. Residue K131 is modified to N6-malonyllysine; alternate. Residue K146 is modified to N6-acetyllysine. H170 and R171 together coordinate (2R)-3-phosphoglycerate. Residue K191 is modified to N6-succinyllysine. The residue at position 196 (Y196) is a Phosphotyrosine. Residue K199 is modified to N6-acetyllysine. S203 bears the Phosphoserine mark. An ADP-binding site is contributed by G214. CDP is bound at residue G214. A215 and K216 together coordinate AMP. A215 contacts ATP. A Mg(2+)-binding site is contributed by A215. K216 bears the N6-(2-hydroxyisobutyryl)lysine mark. Residues A218 and D219 each coordinate Mg(2+). A CDP-binding site is contributed by D219. K220 is an AMP binding site. ATP is bound at residue K220. K220 carries the post-translational modification N6-(2-hydroxyisobutyryl)lysine. G238 serves as a coordination point for ADP. G238 lines the CDP pocket. Position 239 (G239) interacts with AMP. G239 lines the ATP pocket. N6-acetyllysine occurs at positions 267 and 291. An AMP-binding site is contributed by G313. G313 contacts ATP. Position 323 is an N6-(2-hydroxyisobutyryl)lysine (K323). The CDP site is built by G338, V340, and F343. F343 contacts ADP. Residue E344 coordinates AMP. E344 lines the ATP pocket. An N6-acetyllysine modification is found at K361. ATP is bound by residues D375 and T376. A Mg(2+)-binding site is contributed by D375.

It belongs to the phosphoglycerate kinase family. As to quaternary structure, monomer. Interacts with kinase MAPK1/ERK2; the interaction is direct, occurs under hypoxic conditions, and promotes its interaction with PIN1. Interacts with peptidyl-prolyl cis-trans isomerase PIN1; the interaction is direct, occurs under hypoxic conditions, and targets the protein to the mitochondrion by promoting interactions with the TOM complex. Interacts with mitochondrial circRNA mcPGK1 (via its 2nd stem-loop); the interaction is direct and targets the protein to the mitochondrion by promoting interactions with the TOM complex. Interacts with pyruvate dehydrogenase kinase PDK1; the interaction is direct, occurs under hypoxic conditions and leads to PDK1-mediated inhibition of pyruvate dehydrogenase complex activity. Mg(2+) is required as a cofactor. Phosphorylated at Ser-203 by MAPK1/ERK2 under hypoxic conditions, which promotes its mitochondrial targeting.

Its subcellular location is the cytoplasm. It is found in the cytosol. It localises to the mitochondrion matrix. The catalysed reaction is (2R)-3-phosphoglycerate + ATP = (2R)-3-phospho-glyceroyl phosphate + ADP. It catalyses the reaction L-seryl-[protein] + ATP = O-phospho-L-seryl-[protein] + ADP + H(+). It functions in the pathway carbohydrate degradation; glycolysis; pyruvate from D-glyceraldehyde 3-phosphate: step 2/5. Catalyzes one of the two ATP producing reactions in the glycolytic pathway via the reversible conversion of 1,3-diphosphoglycerate to 3-phosphoglycerate. Both L- and D- forms of purine and pyrimidine nucleotides can be used as substrates, but the activity is much lower on pyrimidines. In addition to its role as a glycolytic enzyme, it seems that PGK-1 acts as a polymerase alpha cofactor protein (primer recognition protein). Acts as a protein kinase when localized to the mitochondrion where it phosphorylates pyruvate dehydrogenase kinase PDK1 to inhibit pyruvate dehydrogenase complex activity and suppress the formation of acetyl-coenzyme A from pyruvate, and consequently inhibit oxidative phosphorylation and promote glycolysis. May play a role in sperm motility. The polypeptide is Phosphoglycerate kinase 1 (PGK1) (Cricetulus griseus (Chinese hamster)).